The following is a 392-amino-acid chain: Aspartate aminotransferase (392 aa).

3 residues coordinate L-aspartate: Gly-40, Trp-126, and Asn-176. An N6-(pyridoxal phosphate)lysine modification is found at Lys-239.

It belongs to the class-I pyridoxal-phosphate-dependent aminotransferase family. Homodimer. Requires pyridoxal 5'-phosphate as cofactor.

The protein localises to the cytoplasm. It carries out the reaction L-aspartate + 2-oxoglutarate = oxaloacetate + L-glutamate. This is Aspartate aminotransferase from Bacillus sp. (strain YM-2).